The sequence spans 318 residues: Molybdenum cofactor insertion chaperone PaoD (318 aa).

In terms of assembly, homodimer in solution. Interacts with MocA.

Chaperone required for the production of an active PaoABC aldehyde oxidoreductase. Stabilizes the PaoC subunit and is required for the insertion of the molybdenum cofactor into this subunit. Binds molybdenum cofactor. Binds the molybdopterin cytosine dinucleotide (MCD) form of the cofactor after its formation by the molybdenum cofactor cytidylyltransferase MocA. This is Molybdenum cofactor insertion chaperone PaoD from Escherichia coli (strain K12).